Reading from the N-terminus, the 96-residue chain is Small ribosomal subunit protein bS6 (96 aa).

Belongs to the bacterial ribosomal protein bS6 family.

In terms of biological role, binds together with bS18 to 16S ribosomal RNA. This is Small ribosomal subunit protein bS6 from Salinispora tropica (strain ATCC BAA-916 / DSM 44818 / JCM 13857 / NBRC 105044 / CNB-440).